The primary structure comprises 549 residues: OBERON-like protein (549 aa).

Residues 1-56 are disordered; it reads MLPPRQQPRPGGLQTSLSLVSPDACGSPNPQERGSTSDQARDSPSESASSRETWPT. Composition is skewed to polar residues over residues 28-38 and 45-56; these read PNPQERGSTSD and SESASSRETWPT. The segment at 224–288 adopts a PHD-type zinc-finger fold; that stretch reads LCMCVICYKF…LFRCHACSRT (65 aa). A coiled-coil region spans residues 394 to 520; that stretch reads VQEAIRKMEA…YLFEKIKLQE (127 aa). The interval 519–549 is disordered; that stretch reads QESSRASQSSAGGNDPSQMMYSKIQDLIKNM. Residues 521–538 show a composition bias toward polar residues; that stretch reads SSRASQSSAGGNDPSQMM.

Self-interacts and probably forms heteromers. Binds to VPg of pea seed borne mosaic virus (PSbMV), turnip mosaic virus (TuMV) and lettuce mosaic virus (LMV), but not with VPg of tobacco etch virus (TEV), cowpea mosaic virus (CPMV), tomato black ring virus (TBRV) and grapevine fan leaf virus (GFLV).

The protein resides in the nucleus. Required for the maintenance and/or establishment of both the shoot and root meristems, probably by controlling the expression of the meristem genes and of genes required for auxin responses. Involved in the development of the basal pole and in auxin-mediated root and vascular development in the embryo. Confers sensitivity to turnip mosaic virus (TuMV) probably by promoting viral movement and multiplication via interaction with TuMV VPg. This chain is OBERON-like protein (PVIP), found in Nicotiana benthamiana.